Reading from the N-terminus, the 670-residue chain is UvrABC system protein B (670 aa).

Positions 26-183 (EGLENGLAHQ…RRLSELQYSR (158 aa)) constitute a Helicase ATP-binding domain. 39 to 46 (GVTGSGKT) is a binding site for ATP. The Beta-hairpin signature appears at 92-115 (YYDYYQPEAYVPSSDTFIEKDASV). A Helicase C-terminal domain is found at 431-597 (QVDDLLSEIR…GLNKKIGDIL (167 aa)). Positions 600-620 (GQPSTRGKGKGRGGKVADTNN) are disordered. The 36-residue stretch at 630–665 (DQKIRELEAKMYTHAQNLEFEQAAELRDQVHQLRQQ) folds into the UVR domain.

The protein belongs to the UvrB family. Forms a heterotetramer with UvrA during the search for lesions. Interacts with UvrC in an incision complex.

Its subcellular location is the cytoplasm. Functionally, the UvrABC repair system catalyzes the recognition and processing of DNA lesions. A damage recognition complex composed of 2 UvrA and 2 UvrB subunits scans DNA for abnormalities. Upon binding of the UvrA(2)B(2) complex to a putative damaged site, the DNA wraps around one UvrB monomer. DNA wrap is dependent on ATP binding by UvrB and probably causes local melting of the DNA helix, facilitating insertion of UvrB beta-hairpin between the DNA strands. Then UvrB probes one DNA strand for the presence of a lesion. If a lesion is found the UvrA subunits dissociate and the UvrB-DNA preincision complex is formed. This complex is subsequently bound by UvrC and the second UvrB is released. If no lesion is found, the DNA wraps around the other UvrB subunit that will check the other stand for damage. This chain is UvrABC system protein B, found in Yersinia enterocolitica serotype O:8 / biotype 1B (strain NCTC 13174 / 8081).